The following is a 258-amino-acid chain: Thiazole synthase (258 aa).

K98 functions as the Schiff-base intermediate with DXP in the catalytic mechanism. 1-deoxy-D-xylulose 5-phosphate-binding positions include G159, 185 to 186 (AG), and 207 to 208 (NT).

It belongs to the ThiG family. As to quaternary structure, homotetramer. Forms heterodimers with either ThiH or ThiS.

Its subcellular location is the cytoplasm. It carries out the reaction [ThiS sulfur-carrier protein]-C-terminal-Gly-aminoethanethioate + 2-iminoacetate + 1-deoxy-D-xylulose 5-phosphate = [ThiS sulfur-carrier protein]-C-terminal Gly-Gly + 2-[(2R,5Z)-2-carboxy-4-methylthiazol-5(2H)-ylidene]ethyl phosphate + 2 H2O + H(+). The protein operates within cofactor biosynthesis; thiamine diphosphate biosynthesis. Functionally, catalyzes the rearrangement of 1-deoxy-D-xylulose 5-phosphate (DXP) to produce the thiazole phosphate moiety of thiamine. Sulfur is provided by the thiocarboxylate moiety of the carrier protein ThiS. In vitro, sulfur can be provided by H(2)S. The protein is Thiazole synthase of Bacillus cereus (strain ATCC 14579 / DSM 31 / CCUG 7414 / JCM 2152 / NBRC 15305 / NCIMB 9373 / NCTC 2599 / NRRL B-3711).